Here is a 204-residue protein sequence, read N- to C-terminus: Imidazoleglycerol-phosphate dehydratase (204 aa).

This sequence belongs to the imidazoleglycerol-phosphate dehydratase family.

It localises to the cytoplasm. The enzyme catalyses D-erythro-1-(imidazol-4-yl)glycerol 3-phosphate = 3-(imidazol-4-yl)-2-oxopropyl phosphate + H2O. Its pathway is amino-acid biosynthesis; L-histidine biosynthesis; L-histidine from 5-phospho-alpha-D-ribose 1-diphosphate: step 6/9. This chain is Imidazoleglycerol-phosphate dehydratase, found in Rhodococcus erythropolis (strain PR4 / NBRC 100887).